Here is a 457-residue protein sequence, read N- to C-terminus: ADP-dependent glucose/glucosamine kinase (457 aa).

Residues threonine 5 to histidine 457 enclose the ADPK domain. Residues aspartate 37, glutamate 91, glycine 115–glutamine 116, and histidine 179 each bind D-glucose. Residue glutamate 269 participates in Mg(2+) binding. Asparagine 295 contacts ADP. A Mg(2+)-binding site is contributed by glutamate 298. Residues histidine 345–threonine 346, valine 432, and glycine 442 contribute to the ADP site. Aspartate 443 provides a ligand contact to D-glucose. Aspartate 443 serves as a coordination point for Mg(2+). Aspartate 443 functions as the Proton acceptor in the catalytic mechanism.

This sequence belongs to the ADP-dependent glucokinase family. It depends on Mg(2+) as a cofactor.

The protein localises to the cytoplasm. The catalysed reaction is D-glucose + ADP = D-glucose 6-phosphate + AMP + H(+). The enzyme catalyses D-glucosamine + ADP = D-glucosamine 6-phosphate + AMP + H(+). Its pathway is carbohydrate degradation; glycolysis. Inhibited by 8-bromoadenosine phosphate (8-Br-AMP). Functionally, catalyzes the ADP-dependent phosphorylation of D-glucose to D-glucose 6-phosphate and glucosamine to glucosamine 6-phosphate. The chain is ADP-dependent glucose/glucosamine kinase from Pyrococcus horikoshii (strain ATCC 700860 / DSM 12428 / JCM 9974 / NBRC 100139 / OT-3).